Consider the following 27-residue polypeptide: Bombinin-like peptide 2 (27 aa).

At N27 the chain carries Asparagine amide.

Belongs to the bombinin family. As to expression, expressed by the skin glands.

Its subcellular location is the secreted. Its function is as follows. Has antimicrobial activity, but no hemolytic activity. Preference on killing Gram-negative non-enteric bacteria. This is Bombinin-like peptide 2 from Bombina orientalis (Oriental fire-bellied toad).